A 496-amino-acid chain; its full sequence is Probable 26S proteasome non-ATPase regulatory subunit 3 (496 aa).

Positions 249-428 (ARFLYYLGRI…GYMRSKESTD (180 aa)) constitute a PCI domain. The interval 458-480 (RYPPKSYGKELESAEERREREQQ) is disordered. Basic and acidic residues predominate over residues 464–480 (YGKELESAEERREREQQ).

It belongs to the proteasome subunit S3 family. In terms of assembly, the 26S proteasome is composed of a core protease, known as the 20S proteasome, capped at one or both ends by the 19S regulatory complex (RC). The RC is composed of at least 18 different subunits in two subcomplexes, the base and the lid, which form the portions proximal and distal to the 20S proteolytic core, respectively.

Its function is as follows. Acts as a regulatory subunit of the 26 proteasome which is involved in the ATP-dependent degradation of ubiquitinated proteins. The sequence is that of Probable 26S proteasome non-ATPase regulatory subunit 3 (Dox-A2) from Anopheles gambiae (African malaria mosquito).